We begin with the raw amino-acid sequence, 180 residues long: Hypoxanthine-guanine phosphoribosyltransferase (180 aa).

K43 and G44 together coordinate diphosphate. Residues E99 and D100 each coordinate Mg(2+). D103 serves as the catalytic Proton acceptor. Residues K131, 152–153 (FI), and D159 contribute to the GMP site. R165 is a diphosphate binding site.

The protein belongs to the purine/pyrimidine phosphoribosyltransferase family. Mg(2+) is required as a cofactor.

The protein resides in the cytoplasm. It catalyses the reaction IMP + diphosphate = hypoxanthine + 5-phospho-alpha-D-ribose 1-diphosphate. It carries out the reaction GMP + diphosphate = guanine + 5-phospho-alpha-D-ribose 1-diphosphate. It functions in the pathway purine metabolism; IMP biosynthesis via salvage pathway; IMP from hypoxanthine: step 1/1. Its pathway is purine metabolism; GMP biosynthesis via salvage pathway; GMP from guanine: step 1/1. Its function is as follows. Purine salvage pathway enzyme that catalyzes the transfer of the ribosyl-5-phosphate group from 5-phospho-alpha-D-ribose 1-diphosphate (PRPP) to the N9 position of the 6-oxopurines hypoxanthine and guanine to form the corresponding ribonucleotides IMP (inosine 5'-monophosphate) and GMP (guanosine 5'-monophosphate), with the release of PPi. The protein is Hypoxanthine-guanine phosphoribosyltransferase (hpt) of Streptococcus thermophilus (strain CNRZ 1066).